We begin with the raw amino-acid sequence, 177 residues long: ATP synthase subunit b, chloroplastic (177 aa).

Residues 22 to 42 (ILETNIINLAAVVGIVVFFVG) form a helical membrane-spanning segment.

Belongs to the ATPase B chain family. In terms of assembly, F-type ATPases have 2 components, F(1) - the catalytic core - and F(0) - the membrane proton channel. F(1) has five subunits: alpha(3), beta(3), gamma(1), delta(1), epsilon(1). F(0) has four main subunits: a(1), b(1), b'(1) and c(10-14). The alpha and beta chains form an alternating ring which encloses part of the gamma chain. F(1) is attached to F(0) by a central stalk formed by the gamma and epsilon chains, while a peripheral stalk is formed by the delta, b and b' chains.

The protein localises to the plastid. It is found in the chloroplast thylakoid membrane. Functionally, f(1)F(0) ATP synthase produces ATP from ADP in the presence of a proton or sodium gradient. F-type ATPases consist of two structural domains, F(1) containing the extramembraneous catalytic core and F(0) containing the membrane proton channel, linked together by a central stalk and a peripheral stalk. During catalysis, ATP synthesis in the catalytic domain of F(1) is coupled via a rotary mechanism of the central stalk subunits to proton translocation. Its function is as follows. Component of the F(0) channel, it forms part of the peripheral stalk, linking F(1) to F(0). This Oedogonium cardiacum (Filamentous green alga) protein is ATP synthase subunit b, chloroplastic.